The following is a 365-amino-acid chain: Dihydroorotate dehydrogenase (quinone) (365 aa).

Residues 61–65 and S85 each bind FMN; that span reads AGFDK. K65 is a substrate binding site. 110–114 contributes to the substrate binding site; sequence NRMGF. Residues N139 and N170 each coordinate FMN. N170 is a binding site for substrate. Residue S173 is the Nucleophile of the active site. N175 lines the substrate pocket. FMN-binding residues include K214 and S242. A substrate-binding site is contributed by 243 to 244; the sequence is NT. FMN contacts are provided by residues G266, G295, and 316-317; that span reads YS.

Belongs to the dihydroorotate dehydrogenase family. Type 2 subfamily. In terms of assembly, monomer. It depends on FMN as a cofactor.

It localises to the cell membrane. The enzyme catalyses (S)-dihydroorotate + a quinone = orotate + a quinol. The protein operates within pyrimidine metabolism; UMP biosynthesis via de novo pathway; orotate from (S)-dihydroorotate (quinone route): step 1/1. In terms of biological role, catalyzes the conversion of dihydroorotate to orotate with quinone as electron acceptor. This is Dihydroorotate dehydrogenase (quinone) from Bradyrhizobium diazoefficiens (strain JCM 10833 / BCRC 13528 / IAM 13628 / NBRC 14792 / USDA 110).